The sequence spans 205 residues: Holliday junction branch migration complex subunit RuvA (205 aa).

The domain I stretch occupies residues 1–64; it reads MIGKLKGLID…EDQIKLFGFR (64 aa). The tract at residues 65–143 is domain II; it reads TDHEREWFRL…ALSNVDPAVV (79 aa). The flexible linker stretch occupies residues 144–154; the sequence is QLSGALDDNRA. A domain III region spans residues 154-205; that stretch reads APRPVTDAISALVNLGYGQPQAAAAIAAAARAAGDDAATAQLIKLGLKELSK.

Belongs to the RuvA family. In terms of assembly, homotetramer. Forms an RuvA(8)-RuvB(12)-Holliday junction (HJ) complex. HJ DNA is sandwiched between 2 RuvA tetramers; dsDNA enters through RuvA and exits via RuvB. An RuvB hexamer assembles on each DNA strand where it exits the tetramer. Each RuvB hexamer is contacted by two RuvA subunits (via domain III) on 2 adjacent RuvB subunits; this complex drives branch migration. In the full resolvosome a probable DNA-RuvA(4)-RuvB(12)-RuvC(2) complex forms which resolves the HJ.

It is found in the cytoplasm. The RuvA-RuvB-RuvC complex processes Holliday junction (HJ) DNA during genetic recombination and DNA repair, while the RuvA-RuvB complex plays an important role in the rescue of blocked DNA replication forks via replication fork reversal (RFR). RuvA specifically binds to HJ cruciform DNA, conferring on it an open structure. The RuvB hexamer acts as an ATP-dependent pump, pulling dsDNA into and through the RuvAB complex. HJ branch migration allows RuvC to scan DNA until it finds its consensus sequence, where it cleaves and resolves the cruciform DNA. This is Holliday junction branch migration complex subunit RuvA from Rhodopseudomonas palustris (strain BisB5).